We begin with the raw amino-acid sequence, 212 residues long: Ribosomal RNA small subunit methyltransferase G (212 aa).

Residues Gly-73, 127–128 (IE), and Arg-143 each bind S-adenosyl-L-methionine.

This sequence belongs to the methyltransferase superfamily. RNA methyltransferase RsmG family.

The protein localises to the cytoplasm. The catalysed reaction is guanosine(527) in 16S rRNA + S-adenosyl-L-methionine = N(7)-methylguanosine(527) in 16S rRNA + S-adenosyl-L-homocysteine. Functionally, specifically methylates the N7 position of guanine in position 527 of 16S rRNA. The polypeptide is Ribosomal RNA small subunit methyltransferase G (Methylobacterium nodulans (strain LMG 21967 / CNCM I-2342 / ORS 2060)).